Reading from the N-terminus, the 171-residue chain is Peptide deformylase 1 (171 aa).

Positions 99 and 141 each coordinate Fe cation. The active site involves Glu142.

This sequence belongs to the polypeptide deformylase family. It depends on Fe(2+) as a cofactor.

It catalyses the reaction N-terminal N-formyl-L-methionyl-[peptide] + H2O = N-terminal L-methionyl-[peptide] + formate. Removes the formyl group from the N-terminal Met of newly synthesized proteins. Requires at least a dipeptide for an efficient rate of reaction. N-terminal L-methionine is a prerequisite for activity but the enzyme has broad specificity at other positions. This Xanthomonas axonopodis pv. citri (strain 306) protein is Peptide deformylase 1.